The following is a 313-amino-acid chain: Aspartate carbamoyltransferase catalytic subunit (313 aa).

Positions 51 and 52 each coordinate carbamoyl phosphate. K80 lines the L-aspartate pocket. Carbamoyl phosphate-binding residues include R101, H129, and Q132. Positions 162 and 224 each coordinate L-aspartate. Positions 263 and 264 each coordinate carbamoyl phosphate.

It belongs to the aspartate/ornithine carbamoyltransferase superfamily. ATCase family. Heterododecamer (2C3:3R2) of six catalytic PyrB chains organized as two trimers (C3), and six regulatory PyrI chains organized as three dimers (R2).

It catalyses the reaction carbamoyl phosphate + L-aspartate = N-carbamoyl-L-aspartate + phosphate + H(+). The protein operates within pyrimidine metabolism; UMP biosynthesis via de novo pathway; (S)-dihydroorotate from bicarbonate: step 2/3. Catalyzes the condensation of carbamoyl phosphate and aspartate to form carbamoyl aspartate and inorganic phosphate, the committed step in the de novo pyrimidine nucleotide biosynthesis pathway. The protein is Aspartate carbamoyltransferase catalytic subunit of Bacteroides thetaiotaomicron (strain ATCC 29148 / DSM 2079 / JCM 5827 / CCUG 10774 / NCTC 10582 / VPI-5482 / E50).